The primary structure comprises 294 residues: MIKYYLYLTKPGIVLGNLMSSAGGFLIASRGAISYSLFITMIVGTALVIASGCVLNNIIDRDIDAVMERTKHRVLVQHGQIFLNQSIFYAVILSIFGFLFLSFTKNVLTIYLSAIGLFIYVGVYSLWMKRRSIYSIMVGSISGAMPPVIGYCAAANQFDAGALMLLIIFSLWQIPHSHSIAILRLNDYKVAFIPTFPIKKGVESTKNHMVVYIIGFIIATILFTVMGYTSYIFLIIISIMNLWWLHMGFYGYRIINHDSLWAKKMFLLSLIIIISLNLLLSLDHILFSTKNILL.

Helical transmembrane passes span 8-28, 35-55, 81-101, 107-127, 133-153, 163-183, 209-226, 230-252, and 266-286; these read LTKP…FLIA, YSLF…GCVL, IFLN…FLFL, VLTI…YSLW, IYSI…GYCA, LMLL…IAIL, MVVY…FTVM, SYIF…FYGY, and FLLS…DHIL.

It belongs to the UbiA prenyltransferase family. Protoheme IX farnesyltransferase subfamily.

Its subcellular location is the cell inner membrane. It carries out the reaction heme b + (2E,6E)-farnesyl diphosphate + H2O = Fe(II)-heme o + diphosphate. It participates in porphyrin-containing compound metabolism; heme O biosynthesis; heme O from protoheme: step 1/1. In terms of biological role, converts heme B (protoheme IX) to heme O by substitution of the vinyl group on carbon 2 of heme B porphyrin ring with a hydroxyethyl farnesyl side group. This chain is Protoheme IX farnesyltransferase, found in Blochmanniella pennsylvanica (strain BPEN).